Consider the following 151-residue polypeptide: Putative olfactory receptor 13C6 (151 aa).

Residues Met-1–Thr-27 are Extracellular-facing. The N-linked (GlcNAc...) asparagine glycan is linked to Asn-5. Residues Phe-28–Leu-48 form a helical membrane-spanning segment. Over Met-49 to Tyr-61 the chain is Cytoplasmic. The helical transmembrane segment at Phe-62 to Ile-82 threads the bilayer. Residues Leu-83 to Val-100 are Extracellular-facing. Residues Gln-101–Phe-121 traverse the membrane as a helical segment.

This sequence belongs to the G-protein coupled receptor 1 family.

It localises to the cell membrane. Its function is as follows. Odorant receptor. The sequence is that of Putative olfactory receptor 13C6 from Homo sapiens (Human).